The chain runs to 445 residues: UDP-N-acetylmuramoylalanine--D-glutamate ligase (445 aa).

117-123 (GSNGKTT) lines the ATP pocket.

This sequence belongs to the MurCDEF family.

It localises to the cytoplasm. The enzyme catalyses UDP-N-acetyl-alpha-D-muramoyl-L-alanine + D-glutamate + ATP = UDP-N-acetyl-alpha-D-muramoyl-L-alanyl-D-glutamate + ADP + phosphate + H(+). The protein operates within cell wall biogenesis; peptidoglycan biosynthesis. Cell wall formation. Catalyzes the addition of glutamate to the nucleotide precursor UDP-N-acetylmuramoyl-L-alanine (UMA). The sequence is that of UDP-N-acetylmuramoylalanine--D-glutamate ligase from Neisseria meningitidis serogroup C (strain 053442).